A 245-amino-acid chain; its full sequence is Probable histone chaperone asf-1-like protein (245 aa).

The segment covering 157–166 has biased composition (acidic residues); the sequence is EDPVAEPVDE. The segment at 157–245 is disordered; the sequence is EDPVAEPVDE…SGDVEMGDKH (89 aa). Over residues 167–183 the composition is skewed to basic and acidic residues; that stretch reads EANKVFDEDDLMPLHDD. Acidic residues predominate over residues 184-206; sequence GQDDDEEEEDDDETGPNTEEVDL. Over residues 215-245 the composition is skewed to basic and acidic residues; the sequence is ANAHDGTEQKNGEESMEHDGASGDVEMGDKH.

This sequence belongs to the ASF1 family. As to quaternary structure, interacts with histone H3 and histone H4.

The protein resides in the nucleus. Histone chaperone that facilitates histone deposition and histone exchange and removal during nucleosome assembly and disassembly. The protein is Probable histone chaperone asf-1-like protein (asfl-1) of Caenorhabditis elegans.